The following is a 1004-amino-acid chain: UPF0182 protein Mflv_4654 (1004 aa).

The next 7 membrane-spanning stretches (helical) occupy residues 18-38 (FLIAVSAVLVLLLLLGPRFID), 63-83 (LVIFFVVAILVGAVVFAGLAL), 114-134 (LIGIGVPLAIGVLAGFVGQSY), 176-196 (FVGVFLAFLANLLGHYLFGGI), 211-231 (IQLITLVGLLMLLKAVAYWFD), 260-280 (KLILMAIAVICAVAVFSAIFL), and 288-308 (IGVVLLLLSSLVVGAGWPLVV). Over residues 896-940 (PGADATATGPAATEPPAGQAPQTQGNNTAPPAAQPPNRQGQAPAG) the composition is skewed to low complexity. The interval 896 to 960 (PGADATATGP…TGPTQLSAAK (65 aa)) is disordered.

It belongs to the UPF0182 family.

The protein resides in the cell membrane. The protein is UPF0182 protein Mflv_4654 of Mycolicibacterium gilvum (strain PYR-GCK) (Mycobacterium gilvum (strain PYR-GCK)).